A 319-amino-acid polypeptide reads, in one-letter code: Glutathione synthetase (319 aa).

Positions 129–314 (KLAILNFSRF…VAAMFADAVA (186 aa)) constitute an ATP-grasp domain. 155-211 (LKEHGDIIIKPLDGMGGMGIFRLTEKDPNIGSILETLMQLDSRTIMAQRYIPEIVHG) serves as a coordination point for ATP. The Mg(2+) site is built by Glu285 and Asn287.

This sequence belongs to the prokaryotic GSH synthase family. Mg(2+) serves as cofactor. It depends on Mn(2+) as a cofactor.

The enzyme catalyses gamma-L-glutamyl-L-cysteine + glycine + ATP = glutathione + ADP + phosphate + H(+). Its pathway is sulfur metabolism; glutathione biosynthesis; glutathione from L-cysteine and L-glutamate: step 2/2. This Neisseria meningitidis serogroup B (strain ATCC BAA-335 / MC58) protein is Glutathione synthetase.